We begin with the raw amino-acid sequence, 171 residues long: S-ribosylhomocysteine lyase (171 aa).

Fe cation contacts are provided by H54, H58, and C128.

The protein belongs to the LuxS family. As to quaternary structure, homodimer. Requires Fe cation as cofactor.

The catalysed reaction is S-(5-deoxy-D-ribos-5-yl)-L-homocysteine = (S)-4,5-dihydroxypentane-2,3-dione + L-homocysteine. In terms of biological role, involved in the synthesis of autoinducer 2 (AI-2) which is secreted by bacteria and is used to communicate both the cell density and the metabolic potential of the environment. The regulation of gene expression in response to changes in cell density is called quorum sensing. Catalyzes the transformation of S-ribosylhomocysteine (RHC) to homocysteine (HC) and 4,5-dihydroxy-2,3-pentadione (DPD). In Campylobacter concisus (strain 13826), this protein is S-ribosylhomocysteine lyase.